The sequence spans 1809 residues: Pyochelin synthetase PchF (1809 aa).

The segment at 69-490 is condensation/cyclization; the sequence is FPLTPVQAAY…GLLRRLAQSP (422 aa). Residues 520 to 915 are adenylation; that stretch reads FAERALLTPD…GREDDQVKIR (396 aa). In terms of domain architecture, Carrier spans 1407-1488; that stretch reads APADELESAL…GLAERLRSAP (82 aa). Position 1442 is an O-(pantetheine 4'-phosphoryl)serine (S1442). The segment at 1584-1797 is thioesterase; the sequence is LGRRYAEALH…FDCLGEALAQ (214 aa).

Belongs to the NRP synthetase family. Pantetheine 4'-phosphate serves as cofactor.

The catalysed reaction is holo-[peptidyl-carrier protein] + L-cysteine + ATP = L-cysteinyl-[peptidyl-carrier protein] + AMP + diphosphate. The protein operates within siderophore biosynthesis. Its function is as follows. Involved in the biosynthesis of the siderophore pyochelin. Adenylates L-cysteine and loads it onto its peptidyl carrier domain via a thioester linkage to the phosphopanthetheine moiety. Then forms a peptide bond between the salicyl-thiazolinyl intermediate bound to the second carrier domain of PchE and the cysteine bound to its own peptidyl carrier domain to form the salicyl-thiazolinyl-cysteinyl-S-PCP2 intermediate. It subsequently cyclizes the C-terminal cysteine to form the second thiazoline heterocycle in the salicyl-thiazolinyl-thiazolinyl-S-PCP2 intermediate. When this intermediate is released by the action of a thioesterase, it produces the tricyclic acid hydroxyphenyl-thiazolyl-thiazolinyl-carboxylic acid (HPTT-COOH), an advanced intermediate containing the aryl-4,2-bis-heterocyclic skeleton of the bithiazoline class of siderophores. The protein is Pyochelin synthetase PchF of Pseudomonas aeruginosa (strain UCBPP-PA14).